The primary structure comprises 104 residues: Large ribosomal subunit protein bL21 (104 aa).

Belongs to the bacterial ribosomal protein bL21 family. Part of the 50S ribosomal subunit. Contacts protein L20.

Functionally, this protein binds to 23S rRNA in the presence of protein L20. This is Large ribosomal subunit protein bL21 from Moorella thermoacetica (strain ATCC 39073 / JCM 9320).